Consider the following 45-residue polypeptide: Mu-conotoxin-like Cal 12.1.2c (45 aa).

Intrachain disulfides connect Cys-3/Cys-16, Cys-11/Cys-28, Cys-18/Cys-33, and Cys-27/Cys-39. Pro-23 carries the 4-hydroxyproline modification. 2 positions are modified to 6'-bromotryptophan: Trp-37 and Trp-38. Pro-40 is modified (4-hydroxyproline). Residue Trp-44 is modified to 6'-bromotryptophan.

As to expression, expressed by the venom duct.

The protein resides in the secreted. Mu-conotoxins block voltage-gated sodium channels. This toxin reversibly blocks voltage-gated sodium channel in cephalopods, with no alteration in the voltage dependence of sodium conductance or on the kinetics of inactivation. In Californiconus californicus (California cone), this protein is Mu-conotoxin-like Cal 12.1.2c.